The primary structure comprises 438 residues: MKASAEKIDKNRVELQVEVEPERLDEVLNQAYRKLVRKANIPGFRPGKAPRPVFERFYGKQSLYEEAMEQLIPRAYLEAVADTGIQPVSQPEVDVVQLEEGKPVILKIQVDVKPEVVLGEYKNLKVERQVAEVSDSEVDEELEKLRNRYAKLVTIEEGTVEMGDIITIDYEGTINGEPFAGGSATDRSVEVGKGFVAKDFDAHLVGMSTGETREIPLSIPEDFPNKEVAGKEALITVTVKEIKRKELADLDDEFAKDVSEHDTLEALRAETRKKLENAAEKKIEYVMRNALISEAVAGAEVEVPASMVDARLETMMEEVLRPVIEQGMTKEDFFKLTNQTEESMRADIRPRAEESLKKELVIDRIAEVEGLEATEEEVDAELAKMAEFYRLEADRLREILEQRNDLDSIRTAIKRDKAVDLLVANAEIVGQESTEAEK.

Residues Gly-163–Ala-248 enclose the PPIase FKBP-type domain.

The protein belongs to the FKBP-type PPIase family. Tig subfamily.

The protein resides in the cytoplasm. It catalyses the reaction [protein]-peptidylproline (omega=180) = [protein]-peptidylproline (omega=0). In terms of biological role, involved in protein export. Acts as a chaperone by maintaining the newly synthesized protein in an open conformation. Functions as a peptidyl-prolyl cis-trans isomerase. The protein is Trigger factor of Desulforudis audaxviator (strain MP104C).